The primary structure comprises 225 residues: NAD(P)H-quinone oxidoreductase subunit K, chloroplastic (225 aa).

C43, C44, C108, and C139 together coordinate [4Fe-4S] cluster.

Belongs to the complex I 20 kDa subunit family. In terms of assembly, NDH is composed of at least 16 different subunits, 5 of which are encoded in the nucleus. [4Fe-4S] cluster is required as a cofactor.

The protein localises to the plastid. The protein resides in the chloroplast thylakoid membrane. The enzyme catalyses a plastoquinone + NADH + (n+1) H(+)(in) = a plastoquinol + NAD(+) + n H(+)(out). It carries out the reaction a plastoquinone + NADPH + (n+1) H(+)(in) = a plastoquinol + NADP(+) + n H(+)(out). Functionally, NDH shuttles electrons from NAD(P)H:plastoquinone, via FMN and iron-sulfur (Fe-S) centers, to quinones in the photosynthetic chain and possibly in a chloroplast respiratory chain. The immediate electron acceptor for the enzyme in this species is believed to be plastoquinone. Couples the redox reaction to proton translocation, and thus conserves the redox energy in a proton gradient. The sequence is that of NAD(P)H-quinone oxidoreductase subunit K, chloroplastic from Gossypium barbadense (Sea Island cotton).